Consider the following 793-residue polypeptide: RNA-binding protein spenito (793 aa).

Disordered stretches follow at residues 1 to 93 (MSSH…PPAE) and 243 to 296 (HHDY…KKDK). Residues 25–42 (SRSPGPASRSSLSRNSRS) show a composition bias toward low complexity. Residues 257–268 (RGGHPHHLHGHA) show a composition bias toward basic residues. The span at 285–296 (APYEKPESKKDK) shows a compositional bias: basic and acidic residues. 2 RRM domains span residues 314-391 (RTLF…YGKV) and 395-469 (TRMW…FAEL). Residues 507–623 (YAPRGGYSPY…RNDALASAST (117 aa)) form a disordered region. Basic residues predominate over residues 526 to 536 (GGYRGRGRGMY). Basic and acidic residues predominate over residues 566–593 (DEWRRPPGESYDRGARSSSREPGVERSR). Residues 624–791 (VPDVARKCST…HLVIVVVRGG (168 aa)) enclose the SPOC domain.

The protein belongs to the RRM Spen family. Component of the WMM complex, a N6-methyltransferase complex composed of a catalytic subcomplex, named MAC, and of an associated subcomplex, named MACOM. The MAC subcomplex is composed of Ime4/Mettl3 and Mettl14. The MACOM subcomplex is composed of fl(2)d, Flacc/Xio, Hakai, vir, and, in some cases of nito. Interacts with Sxl. Interacts with Hipk; leading to phosphorylation. Post-translationally, phosphorylated by Hipk at Ser-23, Ser-25 and/or Ser-27; the precise position if phosphorylation sites is unknown. As to expression, widely expressed. Shows some enrichment in the central nervous system.

The protein resides in the nucleus. In terms of biological role, RNA-binding protein that acts as an associated component of the WMM complex, a complex that mediates N6-methyladenosine (m6A) methylation of mRNAs. M6a modification plays a role in the efficiency of mRNA splicing and is required for sex determination. In the WMM complex, may act by binding target RNAs and recruiting the WMM complex. Required for sex determination and dosage compensation via Sxl alternative splicing: m6A methylation acts as a key regulator of Sxl pre-mRNA and promotes female-specific alternative splicing of Sxl, which determines female physiognomy. M6A methylation is also required for neuronal functions. Acts as a positive regulator of canonical Wg signaling during wing disk and eye development. The chain is RNA-binding protein spenito from Drosophila melanogaster (Fruit fly).